Here is a 176-residue protein sequence, read N- to C-terminus: Adenine phosphoribosyltransferase (176 aa).

The protein belongs to the purine/pyrimidine phosphoribosyltransferase family. As to quaternary structure, homodimer.

The protein localises to the cytoplasm. It carries out the reaction AMP + diphosphate = 5-phospho-alpha-D-ribose 1-diphosphate + adenine. The protein operates within purine metabolism; AMP biosynthesis via salvage pathway; AMP from adenine: step 1/1. Catalyzes a salvage reaction resulting in the formation of AMP, that is energically less costly than de novo synthesis. The chain is Adenine phosphoribosyltransferase from Borreliella burgdorferi (strain ATCC 35210 / DSM 4680 / CIP 102532 / B31) (Borrelia burgdorferi).